The primary structure comprises 191 residues: dTTP/UTP pyrophosphatase (191 aa).

Catalysis depends on Asp65, which acts as the Proton acceptor.

This sequence belongs to the Maf family. YhdE subfamily. A divalent metal cation serves as cofactor.

It is found in the cytoplasm. The enzyme catalyses dTTP + H2O = dTMP + diphosphate + H(+). The catalysed reaction is UTP + H2O = UMP + diphosphate + H(+). Nucleoside triphosphate pyrophosphatase that hydrolyzes dTTP and UTP. May have a dual role in cell division arrest and in preventing the incorporation of modified nucleotides into cellular nucleic acids. This is dTTP/UTP pyrophosphatase from Leptospira biflexa serovar Patoc (strain Patoc 1 / Ames).